Here is a 214-residue protein sequence, read N- to C-terminus: Quinolone resistance pentapeptide repeat protein QnrB96 (214 aa).

Pentapeptide repeat domains follow at residues 23-103 and 116-189; these read STFH…SFMN and ITNT…VRGV.

Belongs to the pentapeptide repeat protein family.

Functionally, confers reduced sensitivity to the fluoroquinolone antibiotic ciprofloxacin (five-fold increase in minimum inhibitory concentration) when expressed in E.coli. This chain is Quinolone resistance pentapeptide repeat protein QnrB96, found in Scandinavium goeteborgense.